A 487-amino-acid chain; its full sequence is Protein nucleotidyltransferase YdiU (487 aa).

G90, G92, R93, K113, D125, G126, R176, and R183 together coordinate ATP. D252 functions as the Proton acceptor in the catalytic mechanism. Residues N253 and D262 each contribute to the Mg(2+) site. D262 contacts ATP.

It belongs to the SELO family. It depends on Mg(2+) as a cofactor. Mn(2+) serves as cofactor.

It carries out the reaction L-seryl-[protein] + ATP = 3-O-(5'-adenylyl)-L-seryl-[protein] + diphosphate. The enzyme catalyses L-threonyl-[protein] + ATP = 3-O-(5'-adenylyl)-L-threonyl-[protein] + diphosphate. The catalysed reaction is L-tyrosyl-[protein] + ATP = O-(5'-adenylyl)-L-tyrosyl-[protein] + diphosphate. It catalyses the reaction L-histidyl-[protein] + UTP = N(tele)-(5'-uridylyl)-L-histidyl-[protein] + diphosphate. It carries out the reaction L-seryl-[protein] + UTP = O-(5'-uridylyl)-L-seryl-[protein] + diphosphate. The enzyme catalyses L-tyrosyl-[protein] + UTP = O-(5'-uridylyl)-L-tyrosyl-[protein] + diphosphate. Nucleotidyltransferase involved in the post-translational modification of proteins. It can catalyze the addition of adenosine monophosphate (AMP) or uridine monophosphate (UMP) to a protein, resulting in modifications known as AMPylation and UMPylation. The chain is Protein nucleotidyltransferase YdiU from Azotobacter vinelandii (strain DJ / ATCC BAA-1303).